Consider the following 65-residue polypeptide: Ovary maturating parsin (65 aa).

Low complexity predominate over residues 17-28; it reads PAAPAVAPAAPA. The interval 17–36 is disordered; the sequence is PAAPAVAPAAPASWPHQQRR.

As to quaternary structure, monomer.

Functionally, neurohormone that anticipates ovarian maturation. Acts as a true gonadotropin and stimulates vitellogenin biosynthesis. The protein is Ovary maturating parsin of Locusta migratoria (Migratory locust).